Reading from the N-terminus, the 86-residue chain is Large ribosomal subunit protein bL31B (86 aa).

This sequence belongs to the bacterial ribosomal protein bL31 family. Type B subfamily. In terms of assembly, part of the 50S ribosomal subunit.

This Vibrio parahaemolyticus serotype O3:K6 (strain RIMD 2210633) protein is Large ribosomal subunit protein bL31B.